The primary structure comprises 72 residues: Aurein-2.3 (72 aa).

An N-terminal signal peptide occupies residues 1–22; sequence MAFLKKSLFLVLFLGLVSLSIC. A propeptide spanning residues 23-49 is cleaved from the precursor; it reads EKEKRQNGEDEDENEAANHEEGSEEKR. A disordered region spans residues 27–47; it reads RQNGEDEDENEAANHEEGSEE. A compositionally biased stretch (basic and acidic residues) spans 38–47; it reads AANHEEGSEE. Leucine 65 is modified (leucine amide). The propeptide occupies 69 to 72; it reads NDVE.

Amidation is essential for antibacterial activity against Gram-positive bacteria. Expressed by the skin dorsal glands.

Its subcellular location is the secreted. The protein resides in the target cell membrane. Its function is as follows. Amphipathic alpha-helical antimicrobial peptide with weak to moderate activity against Gram-positive bacteria, and no activity against Gram-negative bacteria. Probably acts by disturbing membrane functions with its amphipathic structure. Strongly inhibits the formation of NO by neuronal nitric oxide synthase (nNOS) at micromolar concentrations. Acts by a non-competitive mechanism, probably by binding to calcium/calmodulin and as a consequence blocking calmodulin attachment to nNOS. The protein is Aurein-2.3 of Ranoidea aurea (Green and golden bell frog).